We begin with the raw amino-acid sequence, 261 residues long: Kallikrein 1-related peptidase b21 (261 aa).

An N-terminal signal peptide occupies residues 1–17 (MRFLILFLALSLGEIDA). Residues 18 to 24 (APPVQSR) constitute a propeptide, activation peptide. The Peptidase S1 domain maps to 25–258 (IVGGFNCEKN…FTSWIKDTMA (234 aa)). Intrachain disulfides connect C31–C173, C50–C66, C152–C219, C184–C198, and C209–C234. Residue H65 is the Charge relay system of the active site. Residue N102 is glycosylated (N-linked (GlcNAc...) asparagine). D120 functions as the Charge relay system in the catalytic mechanism. The active-site Charge relay system is the S213.

This sequence belongs to the peptidase S1 family. Kallikrein subfamily. Expressed in testis and submaxillary gland. In the testis, expression localized specifically to Leydig cells in the interstitial tissues.

The catalysed reaction is Preferential cleavage of Arg-|-Xaa bonds in small molecule substrates. Highly selective action to release kallidin (lysyl-bradykinin) from kininogen involves hydrolysis of Met-|-Xaa or Leu-|-Xaa.. Its activity is regulated as follows. Inhibited by protease inhibitors diisopropylfluorophosphate, leupeptin, antipain, benzamidine, phenylmethylsulfonyl fluoride and soybean trypsin inhibitor. Its function is as follows. Glandular kallikreins cleave Met-Lys and Arg-Ser bonds in kininogen to release Lys-bradykinin. Displays trypsin-like substrate specificity and shows activity towards casein, gelatin, fibronectin and IGFBP3. The chain is Kallikrein 1-related peptidase b21 (Klk1b21) from Mus musculus (Mouse).